We begin with the raw amino-acid sequence, 344 residues long: tRNA dimethylallyltransferase (344 aa).

Residue 19–26 (GPTASGKT) participates in ATP binding. 21 to 26 (TASGKT) lines the substrate pocket.

Belongs to the IPP transferase family. Monomer. Mg(2+) is required as a cofactor.

The enzyme catalyses adenosine(37) in tRNA + dimethylallyl diphosphate = N(6)-dimethylallyladenosine(37) in tRNA + diphosphate. Catalyzes the transfer of a dimethylallyl group onto the adenine at position 37 in tRNAs that read codons beginning with uridine, leading to the formation of N6-(dimethylallyl)adenosine (i(6)A). This chain is tRNA dimethylallyltransferase, found in Bifidobacterium animalis subsp. lactis (strain AD011).